The primary structure comprises 319 residues: Very-long-chain 3-oxoacyl-CoA reductase-A (319 aa).

Residues 17–37 (LFWVGALITASLALYVVYKTI) form a helical membrane-spanning segment. NADP(+) is bound at residue 56–85 (GKWAVVTGATDGIGKSYAEELARRGFSMML). Helical transmembrane passes span 188-208 (GVILNISSASGMFPVPLLTIY) and 282-302 (AVMGWVTTILAPIDLVLNLGL). Position 195 (S195) interacts with substrate. Y208 serves as the catalytic Proton acceptor.

It belongs to the short-chain dehydrogenases/reductases (SDR) family. 17-beta-HSD 3 subfamily.

Its subcellular location is the endoplasmic reticulum membrane. It catalyses the reaction a very-long-chain (3R)-3-hydroxyacyl-CoA + NADP(+) = a very-long-chain 3-oxoacyl-CoA + NADPH + H(+). It carries out the reaction 17beta-estradiol + NAD(+) = estrone + NADH + H(+). The catalysed reaction is 17beta-estradiol + NADP(+) = estrone + NADPH + H(+). It participates in lipid metabolism; fatty acid biosynthesis. The protein operates within steroid biosynthesis; estrogen biosynthesis. Its function is as follows. Catalyzes the second of the four reactions of the long-chain fatty acids elongation cycle. This endoplasmic reticulum-bound enzymatic process, allows the addition of two carbons to the chain of long- and very long-chain fatty acids/VLCFAs per cycle. This enzyme has a 3-ketoacyl-CoA reductase activity, reducing 3-ketoacyl-CoA to 3-hydroxyacyl-CoA, within each cycle of fatty acid elongation. Thereby, it may participate in the production of VLCFAs of different chain lengths that are involved in multiple biological processes as precursors of membrane lipids and lipid mediators. May also catalyze the transformation of estrone (E1) into estradiol (E2) and play a role in estrogen formation. The sequence is that of Very-long-chain 3-oxoacyl-CoA reductase-A (hsd17b12a) from Danio rerio (Zebrafish).